We begin with the raw amino-acid sequence, 162 residues long: 6,7-dimethyl-8-ribityllumazine synthase (162 aa).

5-amino-6-(D-ribitylamino)uracil-binding positions include Phe22, 56 to 58 (TFE), and 80 to 82 (AVI). (2S)-2-hydroxy-3-oxobutyl phosphate is bound at residue 85-86 (GT). His88 serves as the catalytic Proton donor. Position 113 (Met113) interacts with 5-amino-6-(D-ribitylamino)uracil. Arg127 lines the (2S)-2-hydroxy-3-oxobutyl phosphate pocket.

It belongs to the DMRL synthase family.

The catalysed reaction is (2S)-2-hydroxy-3-oxobutyl phosphate + 5-amino-6-(D-ribitylamino)uracil = 6,7-dimethyl-8-(1-D-ribityl)lumazine + phosphate + 2 H2O + H(+). It participates in cofactor biosynthesis; riboflavin biosynthesis; riboflavin from 2-hydroxy-3-oxobutyl phosphate and 5-amino-6-(D-ribitylamino)uracil: step 1/2. Catalyzes the formation of 6,7-dimethyl-8-ribityllumazine by condensation of 5-amino-6-(D-ribitylamino)uracil with 3,4-dihydroxy-2-butanone 4-phosphate. This is the penultimate step in the biosynthesis of riboflavin. This is 6,7-dimethyl-8-ribityllumazine synthase from Anaeromyxobacter dehalogenans (strain 2CP-1 / ATCC BAA-258).